Consider the following 283-residue polypeptide: uncharacterized protein (283 aa).

Residues 3–79 (TGGLAIIQSM…MRVAGDLAKP (77 aa)) form the HTH rpiR-type domain. Residues 39 to 58 (VNEISALANSSDAAVIRLCK) constitute a DNA-binding region (H-T-H motif). An SIS domain is found at 123 to 264 (AVSLLLKAHT…FLGMAAEQYE (142 aa)).

This is an uncharacterized protein from Bacillus subtilis (strain 168).